A 578-amino-acid polypeptide reads, in one-letter code: Acyl-CoA ligase AFT1-1 (578 aa).

ATP is bound by residues 210–218 (SSGTSGAQK), 350–355 (QCYGAT), Asp-438, Arg-457, and Lys-554. The interval 281 to 350 (GVEDLLSIVE…RHHPTWKIKQ (70 aa)) is SBD1. Residues 351-413 (CYGATEAGTA…VSSPSLAIGY (63 aa)) form an SBD2 region. Positions 576-578 (SKI) match the Peroxisomal targeting signal type 1 motif.

It belongs to the ATP-dependent AMP-binding enzyme family.

The protein resides in the peroxisome. Its pathway is mycotoxin biosynthesis. Acyl-CoA ligase; part of the gene clusters that mediate the biosynthesis of the host-selective toxins (HSTs) AF-toxins responsible for Alternaria black spot of strawberry disease by the strawberry pathotype. AF-toxin I and III are valine derivatives of 2,3-dyhydroxy-isovaleric acid and 2-hydroxy-isovaleric acid respectively, while AF II is an isoleucine derivative of 2-hydroxy-valeric acid. These derivatives are bound to a 9,10-epoxy-8-hydroxy-9-methyl-decatrienoic acid (EDA) moiety. On cellular level, AF-toxins affect plasma membrane of susceptible cells and cause a sudden increase in loss of K(+) after a few minutes of toxin treatment. The aldo-keto reductase AFTS1 catalyzes the conversion of 2-keto-isovaleric acid (2-KIV) to 2-hydroxy-isovaleric acid (2-HIV) by reduction of its ketone to an alcohol. The acyl-CoA ligase AFT1, the hydrolase AFT2 and the enoyl-CoA hydratases AFT3 and AFT6, but also the polyketide synthase AFT9, the acyl-CoA dehydrogenase AFT10, the cytochrome P450 monooxygenase AFT11 and the oxidoreductase AFT12 are all involved in the biosynthesis of the AK-, AF- and ACT-toxin common EDA structural moiety. The exact role of each enzyme, and of additional enzymes identified within the AF-toxin clusters have still to be determined. The chain is Acyl-CoA ligase AFT1-1 from Alternaria alternata (Alternaria rot fungus).